A 146-amino-acid polypeptide reads, in one-letter code: Large ribosomal subunit protein uL15 (146 aa).

A compositionally biased stretch (basic and acidic residues) spans 1 to 13; that stretch reads MKLNELKPNEGSR. The segment at 1 to 54 is disordered; that stretch reads MKLNELKPNEGSRRNRKRVGRGTSSGYGKTAGRGQKGQLARTGGKTRLGFEGGQ. A compositionally biased stretch (gly residues) spans 23–35; sequence TSSGYGKTAGRGQ.

It belongs to the universal ribosomal protein uL15 family. In terms of assembly, part of the 50S ribosomal subunit.

Functionally, binds to the 23S rRNA. This is Large ribosomal subunit protein uL15 from Lactobacillus gasseri (strain ATCC 33323 / DSM 20243 / BCRC 14619 / CIP 102991 / JCM 1131 / KCTC 3163 / NCIMB 11718 / NCTC 13722 / AM63).